Here is a 498-residue protein sequence, read N- to C-terminus: MYNLNALIDRLIEISINNNLIEDMDTVYTRNRLLSLFNENSYTPCEEKLTLSFHETLNELINIAIEKKIIENALYSKDIFSSDIMNIFLPTPSLINKEFYKRYAISPKESTDYFYSLSKSSNYIRTDRIAKNINFKAPSKYGTMDITINLSKPEKDPKEIALARNSVKSNYPKCLLCIENEGYEGTVTHPDRANHRMIRLDLNDRTWMLQYSPYLYYNEHCIILSEDHVPMKIDISTFKNLLSFVDKFPHYFTGSNADLPIVGGSILSHEHYQGGNHRFPMNDAKKLFDFSIEGFEDVECEAIKWPISTIRLRGENIDSLVLASDLILKKWRDYSDETLDILAYSNSEMHNTITPMVRKEDGKFVVDLSLRNNRTSKEHPLGIFHPHEEVHHIKKENIGLIEVMGLAVLPGRLLKELEKIKEYLRDEISLDNIEEYHRPWALELKKKFDYLKSSTDLNDFVNKELSNKFVSVLEHCGVFKLNEEGLEGFKRFTNSLNS.

This sequence belongs to the galactose-1-phosphate uridylyltransferase type 2 family.

Its subcellular location is the cytoplasm. The catalysed reaction is alpha-D-galactose 1-phosphate + UDP-alpha-D-glucose = alpha-D-glucose 1-phosphate + UDP-alpha-D-galactose. It functions in the pathway carbohydrate metabolism; galactose metabolism. This chain is Galactose-1-phosphate uridylyltransferase, found in Clostridium perfringens (strain 13 / Type A).